An 812-amino-acid polypeptide reads, in one-letter code: Valine--tRNA ligase (812 aa).

The 'HIGH' region signature appears at 46-56; sequence PTVSGQLHIGH. The short motif at 536–540 is the 'KMSKS' region element; sequence KMSKS. Position 539 (K539) interacts with ATP.

This sequence belongs to the class-I aminoacyl-tRNA synthetase family. ValS type 2 subfamily. As to quaternary structure, monomer.

Its subcellular location is the cytoplasm. It carries out the reaction tRNA(Val) + L-valine + ATP = L-valyl-tRNA(Val) + AMP + diphosphate. In terms of biological role, catalyzes the attachment of valine to tRNA(Val). As ValRS can inadvertently accommodate and process structurally similar amino acids such as threonine, to avoid such errors, it has a 'posttransfer' editing activity that hydrolyzes mischarged Thr-tRNA(Val) in a tRNA-dependent manner. The protein is Valine--tRNA ligase of Rickettsia akari (strain Hartford).